Reading from the N-terminus, the 382-residue chain is UDP-N-acetylglucosamine--N-acetylmuramyl-(pentapeptide) pyrophosphoryl-undecaprenol N-acetylglucosamine transferase (382 aa).

Residues 22–24 (TGG), Asn-134, Arg-186, Ser-212, 285–290 (ALTVAE), and Gln-311 contribute to the UDP-N-acetyl-alpha-D-glucosamine site.

Belongs to the glycosyltransferase 28 family. MurG subfamily.

Its subcellular location is the cell inner membrane. The enzyme catalyses di-trans,octa-cis-undecaprenyl diphospho-N-acetyl-alpha-D-muramoyl-L-alanyl-D-glutamyl-meso-2,6-diaminopimeloyl-D-alanyl-D-alanine + UDP-N-acetyl-alpha-D-glucosamine = di-trans,octa-cis-undecaprenyl diphospho-[N-acetyl-alpha-D-glucosaminyl-(1-&gt;4)]-N-acetyl-alpha-D-muramoyl-L-alanyl-D-glutamyl-meso-2,6-diaminopimeloyl-D-alanyl-D-alanine + UDP + H(+). The protein operates within cell wall biogenesis; peptidoglycan biosynthesis. Cell wall formation. Catalyzes the transfer of a GlcNAc subunit on undecaprenyl-pyrophosphoryl-MurNAc-pentapeptide (lipid intermediate I) to form undecaprenyl-pyrophosphoryl-MurNAc-(pentapeptide)GlcNAc (lipid intermediate II). This is UDP-N-acetylglucosamine--N-acetylmuramyl-(pentapeptide) pyrophosphoryl-undecaprenol N-acetylglucosamine transferase from Pseudoalteromonas atlantica (strain T6c / ATCC BAA-1087).